The chain runs to 655 residues: Ankyrin repeat and SAM domain-containing protein 3 (655 aa).

The segment at M1–S421 is interaction with NEK7. 2 positions are modified to phosphoserine: S2 and S5. ANK repeat units lie at residues D34–K64, G68–V97, E101–M130, H134–V163, Y168–T197, and S201–L220. 3-hydroxyasparagine is present on N96. S201, S225, S243, S244, and S245 each carry phosphoserine. Positions Y314–P426 are disordered. Residue T318 is modified to Phosphothreonine. A phosphoserine mark is found at S319, S366, S369, and S373. Residues K378–H395 show a composition bias toward basic residues. An SAM domain is found at S424–S487. Residues A500 to A575 adopt a coiled-coil conformation. The residue at position 540 (S540) is a Phosphoserine.

As to quaternary structure, homooligomer. Interacts (via SAM domain) with ANKS6 (via SAM domain). Interacts with BICC1. Interacts with NPHP1. Interacts with NEK8. Interacts with HIF1AN. Interacts with NEK7; this interaction alters the subcellular distribution of NEK7 by preventing its nuclear translocation. Post-translationally, hydroxylated at Asn-96, most probably by HIF1AN. In terms of processing, phosphorylations at Ser-5, Ser-225, Thr-318, Ser-319, Ser-366 and Ser-369 occur in a NEK7-dependent manner. Polyubiquitinated. Kidney (at protein level).

The protein resides in the cell projection. The protein localises to the cilium. It is found in the cytoplasm. In terms of biological role, may be involved in vasopressin signaling in the kidney. In Mus musculus (Mouse), this protein is Ankyrin repeat and SAM domain-containing protein 3 (Anks3).